A 457-amino-acid polypeptide reads, in one-letter code: CUB1 family protein C30C2.08 (457 aa).

2 coiled-coil regions span residues 119-174 and 418-448; these read TQND…NISK and QELV…EERE.

This sequence belongs to the CUB1 family.

It is found in the cytoplasm. The protein localises to the nucleus. Involved in bleomycin tolerance with links to DNA repair and/or proteasome function. This chain is CUB1 family protein C30C2.08, found in Schizosaccharomyces pombe (strain 972 / ATCC 24843) (Fission yeast).